The primary structure comprises 264 residues: AA9 family lytic polysaccharide monooxygenase A (264 aa).

Residues 1 to 18 (MHFAALAILSSLVASAAA) form the signal peptide. Histidine 19 contacts Cu(2+). N-linked (GlcNAc...) asparagine glycosylation is found at asparagine 51 and asparagine 75. An intrachain disulfide couples cysteine 59 to cysteine 182. Histidine 96 is a binding site for Cu(2+). N-linked (GlcNAc...) asparagine glycosylation occurs at asparagine 110. Position 162 (histidine 162) interacts with O2. A Cu(2+)-binding site is contributed by tyrosine 179. N-linked (GlcNAc...) asparagine glycans are attached at residues asparagine 218 and asparagine 251.

Belongs to the polysaccharide monooxygenase AA9 family. Cu(2+) serves as cofactor.

It localises to the secreted. The enzyme catalyses [(1-&gt;4)-beta-D-glucosyl]n+m + reduced acceptor + O2 = 4-dehydro-beta-D-glucosyl-[(1-&gt;4)-beta-D-glucosyl]n-1 + [(1-&gt;4)-beta-D-glucosyl]m + acceptor + H2O.. Lytic polysaccharide monooxygenase (LPMO) that depolymerizes crystalline and amorphous polysaccharides via the oxidation of scissile alpha- or beta-(1-4)-glycosidic bonds, yielding C4 oxidation products. Catalysis by LPMOs requires the reduction of the active-site copper from Cu(II) to Cu(I) by a reducing agent and H(2)O(2) or O(2) as a cosubstrate. Active on cellulose and cello-oligosaccharides, as well as plant cell wall-derived hemicellulosic polysaccharides. Also active on cello-oligosaccharides such as cellohexaose, cellopentaose or cellotetraose. The polypeptide is AA9 family lytic polysaccharide monooxygenase A (Phanerochaete carnosa (strain HHB-10118-sp) (White-rot fungus)).